The following is a 195-amino-acid chain: Imidazoleglycerol-phosphate dehydratase (195 aa).

The protein belongs to the imidazoleglycerol-phosphate dehydratase family.

Its subcellular location is the cytoplasm. It carries out the reaction D-erythro-1-(imidazol-4-yl)glycerol 3-phosphate = 3-(imidazol-4-yl)-2-oxopropyl phosphate + H2O. Its pathway is amino-acid biosynthesis; L-histidine biosynthesis; L-histidine from 5-phospho-alpha-D-ribose 1-diphosphate: step 6/9. This is Imidazoleglycerol-phosphate dehydratase from Roseobacter denitrificans (strain ATCC 33942 / OCh 114) (Erythrobacter sp. (strain OCh 114)).